A 1479-amino-acid chain; its full sequence is WASH complex subunit 2 (1479 aa).

Positions 1–17 (MPEEQPQQQQQPVREQP) are enriched in low complexity. Disordered stretches follow at residues 1–25 (MPEEQPQQQQQPVREQPSNPDDVPW), 188–210 (GGLVEGGEQAGTDAQPSANTEKK), 240–564 (FIED…GGVK), 576–1383 (FSGK…FDDI), and 1419–1479 (TSTT…NLFD). Residues 242-279 (EDSDSDSSDEEDEEDVDAEDGSDESSSESSSDDDDEKD) are compositionally biased toward acidic residues. Low complexity predominate over residues 334–349 (SKKSSNSYTSSLSDIL). Residues 422–431 (DDDLFGDSEE) are compositionally biased toward acidic residues. 2 stretches are compositionally biased toward low complexity: residues 465–475 (TTTSSQPQQKK) and 514–532 (TPKPKSTTTSAAPTATTTK). Thr-535 bears the Phosphothreonine mark. Residues 542 to 552 (ASGSESTTGKS) are compositionally biased toward polar residues. Positions 595–620 (TESKASEDDFFSSDKKSTSATKKDAE) are enriched in basic and acidic residues. Residues 709 to 723 (PKAPTTATTTTTTKP) show a composition bias toward low complexity. A compositionally biased stretch (basic and acidic residues) spans 765–781 (TETKKQPITEEPKKKQD). A compositionally biased stretch (polar residues) spans 802-814 (ASISPASPVSTIE). The span at 839–885 (DLTKDEPAKSEPTKVEPTKVEPTKAEPTKVEPAKVEPTKVESDKKES) shows a compositional bias: basic and acidic residues. Over residues 904-916 (KNPTTSSSTTATE) the composition is skewed to polar residues. The segment covering 951–968 (SSTTKKSTTTTTTTTSSK) has biased composition (low complexity). Residues 981–990 (KKVEEKKSSD) show a composition bias toward basic and acidic residues. Composition is skewed to low complexity over residues 991-1000 (FDSFFSGSDD) and 1010-1021 (KTTTTPPLTSTT). Residues 1062–1075 (PLTSNNTKNRTKSI) show a composition bias toward polar residues. A compositionally biased stretch (basic and acidic residues) spans 1091–1107 (EKNRSESPTSEKAEPTK). Positions 1108–1123 (KTSNISSLQNKLSLNP) are enriched in polar residues. Over residues 1147–1162 (STNNDNDSSATDLSDS) the composition is skewed to low complexity. Composition is skewed to polar residues over residues 1163–1174 (GRSSPSVTSPTL) and 1220–1236 (KSGTSAPNRSESPTPTQ). Ser-1249 carries the phosphoserine modification. The span at 1277–1292 (EKTSSGKSSPSPTIKS) shows a compositional bias: low complexity. Residues 1307–1317 (ASTTTKPTASE) are compositionally biased toward polar residues. Residues 1327-1358 (KKSEPETPKETPKETPKEKEQTKEKEQPKETP) are compositionally biased toward basic and acidic residues. Composition is skewed to low complexity over residues 1419-1445 (TSTTSKSTTTTTTTTTTKAKSTKAVDN) and 1452-1466 (NTTTKATPTKATPSK).

This sequence belongs to the FAM21 family. In terms of assembly, probable component of the WASH complex.

The polypeptide is WASH complex subunit 2 (Dictyostelium discoideum (Social amoeba)).